The primary structure comprises 71 residues: Ranatuerin-2Va (71 aa).

An N-terminal signal peptide occupies residues Met-1–Cys-22. A propeptide spanning residues Glu-23–Arg-43 is cleaved from the precursor. A disulfide bridge links Cys-66 with Cys-71.

Expressed by the skin glands.

It localises to the secreted. Antimicrobial peptide. The polypeptide is Ranatuerin-2Va (Odorrana versabilis (Chinese bamboo leaf odorous frog)).